Consider the following 586-residue polypeptide: Ezrin (586 aa).

Positions 2–295 constitute an FERM domain; sequence PKPINVRVTT…GNHELYMRRR (294 aa). An N6-acetyllysine modification is found at Lys-60. Positions 115–120 match the [IL]-x-C-x-x-[DE] motif motif; the sequence is IYCPPE. The residue at position 146 (Tyr-146) is a Phosphotyrosine; by PDGFR. An interaction with SCYL3 region spans residues 244–586; sequence EIRNISFNDK…KQRIDEFEAM (343 aa). Residues 302-462 adopt a coiled-coil conformation; sequence VQQMKAQARE…QDDLVKTKEE (161 aa). The tract at residues 306 to 338 is disordered; it reads KAQAREEKHQKQLERQQLETEKKRRETVEREKE. Residues 308 to 338 are compositionally biased toward basic and acidic residues; that stretch reads QAREEKHQKQLERQQLETEKKRRETVEREKE. Phosphotyrosine; by PDGFR is present on Tyr-354. A Phosphoserine modification is found at Ser-366. Tyr-478 is modified (phosphotyrosine). Positions 534–565 are disordered; sequence LSNELSQARDENKRTHNDIIHNENMRQGRDKY. Position 535 is a phosphoserine (Ser-535). Residues 540-565 are compositionally biased toward basic and acidic residues; the sequence is QARDENKRTHNDIIHNENMRQGRDKY. Residue Thr-567 is modified to Phosphothreonine; by ROCK2 and PKC/PRKCI.

As to quaternary structure, interacts with PALS1 and NHERF2. Found in a complex with EZR, PODXL and NHERF2. Interacts with MCC, PLEKHG6, PODXL, SCYL3/PACE1, NHERF1 and TMEM8B. Interacts (when phosphorylated) with FES/FPS. Interacts with dimeric S100P, the interaction may be activating through unmasking of F-actin binding sites. Identified in complexes that contain VIM, EZR, AHNAK, BFSP1, BFSP2, ANK2, PLEC, PRX and spectrin. Detected in a complex composed of at least EZR, AHNAK, PPL and PRX. Interacts with PDPN (via cytoplasmic domain); activates RHOA and promotes epithelial-mesenchymal transition. Interacts with SPN/CD43 cytoplasmic tail. Interacts with CD44 and ICAM2. Interacts with SLC9A3; interaction targets SLC9A3 to the apical membrane. Interacts with SLC9A1; regulates interactions of SLC9A1 with cytoskeletal and promotes stress fiber formation. Interacts with CLIC5; may work together in a complex which also includes RDX and MYO6 to stabilize linkages between the plasma membrane and subjacent actin cytoskeleton at the base of stereocilia. Phosphorylated by tyrosine-protein kinases. Phosphorylation by ROCK2 suppresses the head-to-tail association of the N-terminal and C-terminal halves resulting in an opened conformation which is capable of actin and membrane-binding. In terms of processing, S-nitrosylation is induced by interferon-gamma and oxidatively-modified low-densitity lipoprotein (LDL(ox)) possibly implicating the iNOS-S100A8/9 transnitrosylase complex. As to expression, detected in eye lens fiber cells. Expressed in cerebrum and cerebellum (at protein level). Component of the microvilli of intestinal epithelial cells.

It is found in the apical cell membrane. The protein localises to the cell projection. It localises to the microvillus membrane. Its subcellular location is the ruffle membrane. The protein resides in the cytoplasm. It is found in the cell cortex. The protein localises to the cytoskeleton. It localises to the microvillus. A head-to-tail association, of the N-terminal and C-terminal halves results in a closed conformation (inactive form) which is incapable of actin or membrane-binding. Probably involved in connections of major cytoskeletal structures to the plasma membrane. In epithelial cells, required for the formation of microvilli and membrane ruffles on the apical pole. Along with PLEKHG6, required for normal macropinocytosis. The protein is Ezrin (Ezr) of Mus musculus (Mouse).